We begin with the raw amino-acid sequence, 447 residues long: Putative branched-chain amino acid carrier protein SH1502 (447 aa).

The next 13 helical transmembrane spans lie at 6 to 26, 40 to 60, 74 to 94, 116 to 136, 143 to 163, 193 to 213, 229 to 249, 270 to 287, 290 to 310, 328 to 348, 350 to 370, 382 to 402, and 417 to 437; these read WIVG…IFPP, VIAF…VGAL, PKFS…LFAI, LVLF…CINP, IGSL…IKGF, GYLT…VNAI, VMSG…LGFI, VGAY…GVFG, LLGI…IVSV, IFFT…VISM, VPVL…ILLA, IPIA…NGWV, and LEWF…AKFV.

The protein belongs to the branched chain amino acid transporter family.

The protein resides in the cell membrane. Its function is as follows. Component of the transport system for branched-chain amino acids (leucine, isoleucine and valine), which is coupled to a proton motive force. The protein is Putative branched-chain amino acid carrier protein SH1502 of Staphylococcus haemolyticus (strain JCSC1435).